The chain runs to 600 residues: Aspartate--tRNA(Asp/Asn) ligase (600 aa).

Glu174 serves as a coordination point for L-aspartate. An aspartate region spans residues 198 to 201; the sequence is QLFK. Arg220 is a binding site for L-aspartate. ATP-binding positions include 220 to 222 and Gln229; that span reads RDE. His457 lines the L-aspartate pocket. Glu491 is a binding site for ATP. An L-aspartate-binding site is contributed by Arg498. 543–546 contacts ATP; it reads GLDR.

This sequence belongs to the class-II aminoacyl-tRNA synthetase family. Type 1 subfamily. Homodimer.

It is found in the cytoplasm. The catalysed reaction is tRNA(Asx) + L-aspartate + ATP = L-aspartyl-tRNA(Asx) + AMP + diphosphate. In terms of biological role, aspartyl-tRNA synthetase with relaxed tRNA specificity since it is able to aspartylate not only its cognate tRNA(Asp) but also tRNA(Asn). Reaction proceeds in two steps: L-aspartate is first activated by ATP to form Asp-AMP and then transferred to the acceptor end of tRNA(Asp/Asn). This Burkholderia ambifaria (strain ATCC BAA-244 / DSM 16087 / CCUG 44356 / LMG 19182 / AMMD) (Burkholderia cepacia (strain AMMD)) protein is Aspartate--tRNA(Asp/Asn) ligase.